The chain runs to 317 residues: Aspartate carbamoyltransferase catalytic subunit (317 aa).

Carbamoyl phosphate-binding residues include Arg66 and Thr67. Lys94 is a binding site for L-aspartate. Residues Arg116, His144, and Gln147 each contribute to the carbamoyl phosphate site. 2 residues coordinate L-aspartate: Arg177 and Arg231. The carbamoyl phosphate site is built by Gly272 and Pro273.

This sequence belongs to the aspartate/ornithine carbamoyltransferase superfamily. ATCase family. In terms of assembly, heterododecamer (2C3:3R2) of six catalytic PyrB chains organized as two trimers (C3), and six regulatory PyrI chains organized as three dimers (R2).

The enzyme catalyses carbamoyl phosphate + L-aspartate = N-carbamoyl-L-aspartate + phosphate + H(+). It participates in pyrimidine metabolism; UMP biosynthesis via de novo pathway; (S)-dihydroorotate from bicarbonate: step 2/3. In terms of biological role, catalyzes the condensation of carbamoyl phosphate and aspartate to form carbamoyl aspartate and inorganic phosphate, the committed step in the de novo pyrimidine nucleotide biosynthesis pathway. This chain is Aspartate carbamoyltransferase catalytic subunit, found in Beijerinckia indica subsp. indica (strain ATCC 9039 / DSM 1715 / NCIMB 8712).